Here is a 542-residue protein sequence, read N- to C-terminus: MNKRSLENNELNEIQNNQNKNNNNKINKEIPSDNTPLKKLKSINSLEQLQEVDEDEDLDVEIDTKLINKLDKKGRKYEFVGEGYSDEEQISDDYEDDESSEYEYGYENEDELLDDEDHLDNINEIKKIQKKLVNTETSTSITNTSSTTTTSTSTTTTTTTKTQINETILLDILNNNKDEVDDEIQRIGNNVGNSKEEEGEEEEENIELVARSFIYKHIQEKKSLGIDPIEFTKDIGFKLELEKDDDAWEIITAFLTRKKVAVNLFLNYLKYNTLARPYRKKIATLDLSTFEKVCQLFESSKNIVIITGAGVSVSCGIPDFRSKGGVYETIEKKYNLPRPESLFDIHYLRANPLPFFEFAKEIFPGNHKPSPTHSFIKLLDEKGKLLRNYTQNIDTLEHVAGIDREKLVNCHGSFSTATCITCKLTVDGTTIRDTIMKMEIPLCQQCNDGQSFMKPDIVFFGENLPDRFDQCVLKDVKDIDLLIVMGSSLQVQPVSLLPDIVDKQIPQILINRELVAQPHEFDYVYLGDCDQFVQDLLNKVKW.

Disordered regions lie at residues 1 to 37 and 136 to 160; these read MNKRSLENNELNEIQNNQNKNNNNKINKEIPSDNTPL and ETSTSITNTSSTTTTSTSTTTTTTT. Residues 8-25 are compositionally biased toward low complexity; it reads NNELNEIQNNQNKNNNNK. Residues 165–193 adopt a coiled-coil conformation; sequence NETILLDILNNNKDEVDDEIQRIGNNVGN. One can recognise a Deacetylase sirtuin-type domain in the interval 283-542; sequence ATLDLSTFEK…VQDLLNKVKW (260 aa). The Proton acceptor role is filled by His-411. Zn(2+)-binding residues include Cys-419, Cys-422, Cys-443, and Cys-446.

It belongs to the sirtuin family. Zn(2+) is required as a cofactor.

It catalyses the reaction N(6)-acetyl-L-lysyl-[protein] + NAD(+) + H2O = 2''-O-acetyl-ADP-D-ribose + nicotinamide + L-lysyl-[protein]. In terms of biological role, NAD-dependent deacetylase, which plays an important role in the regulation of transcriptional repression. The polypeptide is NAD-dependent deacetylase sir2D (sir2D) (Dictyostelium discoideum (Social amoeba)).